A 677-amino-acid polypeptide reads, in one-letter code: Protein hook (677 aa).

Residues 6 to 123 form the Calponin-homology (CH) domain; it reads NEMYYSLLEW…RLLQLVLGCA (118 aa). 2 coiled-coil regions span residues 135-436 and 478-588; these read EIMC…KCGH and QTAL…AKEV.

The protein belongs to the hook family. Homodimer. Interacts with microtubules via its N-terminus.

It is found in the cytoplasm. Its subcellular location is the cytoskeleton. The protein resides in the endosome. It localises to the synapse. In terms of biological role, involved in endocytic trafficking by stabilizing organelles of the endocytic pathway. Probably acts as a cytoskeletal linker protein required to tether endosome vesicles to the cytoskeleton. Involved in modulation of endocytosis at stages required for down-regulation of membrane proteins that control synapse size. Not involved in synaptic vesicle recycling. Required in R7 cells for boss endocytosis into multivesicular bodies (MVBs). Has a role in regulating adult longevity. The chain is Protein hook from Drosophila pseudoobscura pseudoobscura (Fruit fly).